The primary structure comprises 186 residues: ATP synthase subunit b 3 (186 aa).

The helical transmembrane segment at 5-25 (LLPALLTFSATPALAAKGPFF) threads the bilayer.

This sequence belongs to the ATPase B chain family. F-type ATPases have 2 components, F(1) - the catalytic core - and F(0) - the membrane proton channel. F(1) has five subunits: alpha(3), beta(3), gamma(1), delta(1), epsilon(1). F(0) has three main subunits: a(1), b(2) and c(10-14). The alpha and beta chains form an alternating ring which encloses part of the gamma chain. F(1) is attached to F(0) by a central stalk formed by the gamma and epsilon chains, while a peripheral stalk is formed by the delta and b chains.

The protein localises to the cell inner membrane. Functionally, f(1)F(0) ATP synthase produces ATP from ADP in the presence of a proton or sodium gradient. F-type ATPases consist of two structural domains, F(1) containing the extramembraneous catalytic core and F(0) containing the membrane proton channel, linked together by a central stalk and a peripheral stalk. During catalysis, ATP synthesis in the catalytic domain of F(1) is coupled via a rotary mechanism of the central stalk subunits to proton translocation. Its function is as follows. Component of the F(0) channel, it forms part of the peripheral stalk, linking F(1) to F(0). This Dinoroseobacter shibae (strain DSM 16493 / NCIMB 14021 / DFL 12) protein is ATP synthase subunit b 3.